A 69-amino-acid chain; its full sequence is Toxin Tma3 (69 aa).

The LCN-type CS-alpha/beta domain maps to 2 to 66 (KDDYPVDTAK…SPTKKSGRCN (65 aa)). Disulfide bonds link Cys14–Cys65, Cys18–Cys41, Cys27–Cys48, and Cys31–Cys50.

It belongs to the long (4 C-C) scorpion toxin superfamily. Sodium channel inhibitor family. In terms of tissue distribution, expressed by the venom gland.

The protein resides in the secreted. Its function is as follows. Inhibits voltage-gated sodium channels (Nav). This toxin shows insect lethality against crickets. This chain is Toxin Tma3, found in Tityus macrochirus (Scorpion).